Consider the following 93-residue polypeptide: MARLDDATIASLLQEIPGWERQGDALVRTYVFKNFREAMAFVNRVAELAEEARHHPDITIRYNRVHLLLTTHEAGGITERDIALARKLAELAS.

This sequence belongs to the pterin-4-alpha-carbinolamine dehydratase family.

It catalyses the reaction (4aS,6R)-4a-hydroxy-L-erythro-5,6,7,8-tetrahydrobiopterin = (6R)-L-erythro-6,7-dihydrobiopterin + H2O. The chain is Putative pterin-4-alpha-carbinolamine dehydratase from Thermomicrobium roseum (strain ATCC 27502 / DSM 5159 / P-2).